The chain runs to 159 residues: MSGNSRATRLGDRIKEIVATMLERRIKDPRLGFVTVTDVELTGDLQHATVFYTVLGDAEELASSTAALESAKGLLRSEVGKQTGVKHTPTLTFQLDATPQNAAHVEEALREAAARDAEVAALAATATYAGEADPYRRPAVDDAGDSADDADPAEDERPS.

Positions Thr127 to Ser159 are disordered. Over residues Asp142–Ser159 the composition is skewed to acidic residues.

It belongs to the RbfA family. As to quaternary structure, monomer. Binds 30S ribosomal subunits, but not 50S ribosomal subunits or 70S ribosomes.

The protein resides in the cytoplasm. Functionally, one of several proteins that assist in the late maturation steps of the functional core of the 30S ribosomal subunit. Associates with free 30S ribosomal subunits (but not with 30S subunits that are part of 70S ribosomes or polysomes). Required for efficient processing of 16S rRNA. May interact with the 5'-terminal helix region of 16S rRNA. This Beutenbergia cavernae (strain ATCC BAA-8 / DSM 12333 / CCUG 43141 / JCM 11478 / NBRC 16432 / NCIMB 13614 / HKI 0122) protein is Ribosome-binding factor A.